Consider the following 331-residue polypeptide: Endo-1,4-beta-xylanase 2 (331 aa).

An N-terminal signal peptide occupies residues 1–17 (MKASSVLLGLAPLAALA). Residues 31–329 (QQSIDALMKA…KPAYNSVVQA (299 aa)) enclose the GH10 domain. Residue Asn-105 is glycosylated (N-linked (GlcNAc...) asparagine). The Proton donor role is filled by Glu-159. The active-site Nucleophile is Glu-266. Residues Cys-284 and Cys-290 are joined by a disulfide bond. N-linked (GlcNAc...) asparagine glycosylation is present at Asn-301.

The protein belongs to the glycosyl hydrolase 10 (cellulase F) family.

The protein localises to the secreted. The enzyme catalyses Endohydrolysis of (1-&gt;4)-beta-D-xylosidic linkages in xylans.. It participates in glycan degradation; xylan degradation. Functionally, endo-1,4-beta-xylanase involved in the hydrolysis of xylan, a major structural heterogeneous polysaccharide found in plant biomass representing the second most abundant polysaccharide in the biosphere, after cellulose. Accounts for approximately 70 percent of the endoxylanase activity in the culture filtrate. This chain is Endo-1,4-beta-xylanase 2 (XYL2), found in Pyricularia grisea (Crabgrass-specific blast fungus).